Here is a 473-residue protein sequence, read N- to C-terminus: Ribulose bisphosphate carboxylase large chain (473 aa).

The propeptide occupies 1 to 2; sequence MS. N-acetylproline is present on Pro3. Position 14 is an N6,N6,N6-trimethyllysine (Lys14). The substrate site is built by Asn123 and Thr173. Lys175 functions as the Proton acceptor in the catalytic mechanism. Lys177 serves as a coordination point for substrate. The Mg(2+) site is built by Lys201, Asp203, and Glu204. Lys201 is modified (N6-carboxylysine). Residue His294 is the Proton acceptor of the active site. Substrate is bound by residues Arg295, His327, and Ser379.

This sequence belongs to the RuBisCO large chain family. Type I subfamily. Heterohexadecamer of 8 large chains and 8 small chains; disulfide-linked. The disulfide link is formed within the large subunit homodimers. The cofactor is Mg(2+). The disulfide bond which can form in the large chain dimeric partners within the hexadecamer appears to be associated with oxidative stress and protein turnover.

Its subcellular location is the plastid. It localises to the chloroplast. It carries out the reaction 2 (2R)-3-phosphoglycerate + 2 H(+) = D-ribulose 1,5-bisphosphate + CO2 + H2O. The enzyme catalyses D-ribulose 1,5-bisphosphate + O2 = 2-phosphoglycolate + (2R)-3-phosphoglycerate + 2 H(+). Its function is as follows. RuBisCO catalyzes two reactions: the carboxylation of D-ribulose 1,5-bisphosphate, the primary event in carbon dioxide fixation, as well as the oxidative fragmentation of the pentose substrate in the photorespiration process. Both reactions occur simultaneously and in competition at the same active site. This Monarda didyma (Scarlet bee-balm) protein is Ribulose bisphosphate carboxylase large chain.